A 202-amino-acid polypeptide reads, in one-letter code: ATP-dependent Clp protease proteolytic subunit (202 aa).

The active-site Nucleophile is the Ser-106. His-131 is a catalytic residue.

It belongs to the peptidase S14 family. In terms of assembly, fourteen ClpP subunits assemble into 2 heptameric rings which stack back to back to give a disk-like structure with a central cavity, resembling the structure of eukaryotic proteasomes.

The protein localises to the cytoplasm. The catalysed reaction is Hydrolysis of proteins to small peptides in the presence of ATP and magnesium. alpha-casein is the usual test substrate. In the absence of ATP, only oligopeptides shorter than five residues are hydrolyzed (such as succinyl-Leu-Tyr-|-NHMec, and Leu-Tyr-Leu-|-Tyr-Trp, in which cleavage of the -Tyr-|-Leu- and -Tyr-|-Trp bonds also occurs).. Functionally, cleaves peptides in various proteins in a process that requires ATP hydrolysis. Has a chymotrypsin-like activity. Plays a major role in the degradation of misfolded proteins. The protein is ATP-dependent Clp protease proteolytic subunit of Acidovorax ebreus (strain TPSY) (Diaphorobacter sp. (strain TPSY)).